Reading from the N-terminus, the 127-residue chain is Glycine cleavage system H protein (127 aa).

The Lipoyl-binding domain occupies 22–104 (KVRIGITDFA…YEKAWMIVVE (83 aa)). At K63 the chain carries N6-lipoyllysine.

This sequence belongs to the GcvH family. In terms of assembly, the glycine cleavage system is composed of four proteins: P, T, L and H. (R)-lipoate is required as a cofactor.

The glycine cleavage system catalyzes the degradation of glycine. The H protein shuttles the methylamine group of glycine from the P protein to the T protein. Functionally, is also involved in protein lipoylation via its role as an octanoyl/lipoyl carrier protein intermediate. The polypeptide is Glycine cleavage system H protein (Bacillus licheniformis (strain ATCC 14580 / DSM 13 / JCM 2505 / CCUG 7422 / NBRC 12200 / NCIMB 9375 / NCTC 10341 / NRRL NRS-1264 / Gibson 46)).